Consider the following 463-residue polypeptide: Cysteine--tRNA ligase (463 aa).

Cysteine 29 is a binding site for Zn(2+). Residues 31-41 (ATPQTQPHIGH) carry the 'HIGH' region motif. The Zn(2+) site is built by cysteine 212, histidine 237, and glutamate 241. The short motif at 268–272 (KMSKS) is the 'KMSKS' region element. Residue lysine 271 participates in ATP binding.

It belongs to the class-I aminoacyl-tRNA synthetase family. Monomer. It depends on Zn(2+) as a cofactor.

It is found in the cytoplasm. It carries out the reaction tRNA(Cys) + L-cysteine + ATP = L-cysteinyl-tRNA(Cys) + AMP + diphosphate. The polypeptide is Cysteine--tRNA ligase (Corynebacterium diphtheriae (strain ATCC 700971 / NCTC 13129 / Biotype gravis)).